The following is a 175-amino-acid chain: ATP synthase subunit b (175 aa).

The helical transmembrane segment at 22–44 threads the bilayer; it reads MLVQLFFFLILLALLKKFAWGPL.

Belongs to the ATPase B chain family. F-type ATPases have 2 components, F(1) - the catalytic core - and F(0) - the membrane proton channel. F(1) has five subunits: alpha(3), beta(3), gamma(1), delta(1), epsilon(1). F(0) has three main subunits: a(1), b(2) and c(10-14). The alpha and beta chains form an alternating ring which encloses part of the gamma chain. F(1) is attached to F(0) by a central stalk formed by the gamma and epsilon chains, while a peripheral stalk is formed by the delta and b chains.

It is found in the cell membrane. Its function is as follows. F(1)F(0) ATP synthase produces ATP from ADP in the presence of a proton or sodium gradient. F-type ATPases consist of two structural domains, F(1) containing the extramembraneous catalytic core and F(0) containing the membrane proton channel, linked together by a central stalk and a peripheral stalk. During catalysis, ATP synthesis in the catalytic domain of F(1) is coupled via a rotary mechanism of the central stalk subunits to proton translocation. Functionally, component of the F(0) channel, it forms part of the peripheral stalk, linking F(1) to F(0). The polypeptide is ATP synthase subunit b (Oceanobacillus iheyensis (strain DSM 14371 / CIP 107618 / JCM 11309 / KCTC 3954 / HTE831)).